Consider the following 92-residue polypeptide: Protamine-2 (92 aa).

A disordered region spans residues Met-1 to Arg-76. The segment covering Arg-7–Gln-20 has biased composition (low complexity). Residues Ser-8 and Ser-10 each carry the phosphoserine modification. Basic and acidic residues predominate over residues Arg-21 to Asp-36. Basic residues predominate over residues Arg-42–Arg-76.

Belongs to the protamine P2 family. As to quaternary structure, interacts with TDRP. Proteolytic processing into mature chains is required for histone eviction during spermatogenesis. Transition proteins (TNP1 and TNP2) are required for processing. Testis.

It is found in the nucleus. Its subcellular location is the chromosome. Protamines substitute for histones in the chromatin of sperm during the haploid phase of spermatogenesis. They compact sperm DNA into a highly condensed, stable and inactive complex. This is Protamine-2 (PRM2) from Sus scrofa (Pig).